Reading from the N-terminus, the 82-residue chain is Cytochrome b559 subunit alpha (82 aa).

The chain crosses the membrane as a helical span at residues 22–36 (IIHAVALPAIFVAGF). Histidine 24 serves as a coordination point for heme.

This sequence belongs to the PsbE/PsbF family. Heterodimer of an alpha subunit and a beta subunit. PSII is composed of 1 copy each of membrane proteins PsbA, PsbB, PsbC, PsbD, PsbE, PsbF, PsbH, PsbI, PsbJ, PsbK, PsbL, PsbM, PsbT, PsbX, PsbY, Psb30/Ycf12, peripheral proteins PsbO, CyanoQ (PsbQ), PsbU, PsbV and a large number of cofactors. It forms dimeric complexes. The cofactor is heme b.

The protein resides in the cellular thylakoid membrane. Functionally, this b-type cytochrome is tightly associated with the reaction center of photosystem II (PSII). PSII is a light-driven water:plastoquinone oxidoreductase that uses light energy to abstract electrons from H(2)O, generating O(2) and a proton gradient subsequently used for ATP formation. It consists of a core antenna complex that captures photons, and an electron transfer chain that converts photonic excitation into a charge separation. The sequence is that of Cytochrome b559 subunit alpha from Prochlorococcus marinus (strain NATL1A).